The following is a 231-amino-acid chain: MKVFILACLVALALAREKDAFTVSSETGSISSEESVEHINEKLQKVKLMGQVQSEDVLQNKFHSGIQSEPQAIPYAQTISCSPIPQNIQPIAQPPVVPTVGPIISPELESFLKAKATVLPKHKQMPFLNSETVLRLFNSQIPSLDLANLHLPQSPAQLQAQIVQAFPQTPAVVSSQPQLSHPQSKSQYLVQQLAPLFQQGMPVQDLLQYLDLLLNPTLQFLATQQLHSTSV.

Residues 1–15 (MKVFILACLVALALA) form the signal peptide. At serine 24 the chain carries Phosphoserine. Phosphothreonine is present on threonine 27. Phosphoserine is present on residues serine 29, serine 31, and serine 32.

It belongs to the beta-casein family. In terms of tissue distribution, mammary gland specific. Secreted in milk.

The protein localises to the secreted. In terms of biological role, important role in determination of the surface properties of the casein micelles. This is Beta-casein (Csn2) from Rattus norvegicus (Rat).